A 221-amino-acid chain; its full sequence is Protein myomaker (221 aa).

At 1 to 3 (MGT) the chain is on the extracellular side. The chain crosses the membrane as a helical span at residues 4–24 (LVAKLLLPTLSSLAFLPTVSI). The Cytoplasmic segment spans residues 25-34 (AAKRRFHMEA). A helical transmembrane segment spans residues 35–55 (MVYLFTLFFVALHHACNGPGL). Residues 56–64 (SVLCFMRHD) lie on the Extracellular side of the membrane. Residues 65–85 (ILEYFSVYGTALSMWVSLMAL) form a helical membrane-spanning segment. Residues 86 to 92 (ADFDEPK) lie on the Cytoplasmic side of the membrane. A helical transmembrane segment spans residues 93 to 110 (RSTFVMFGVLTIAVRIYH). At 111–113 (DRW) the chain is on the extracellular side. A helical membrane pass occupies residues 114–134 (GYGVYSGPIGTAILIIAAKWL). Residues 135–153 (QKMKEKKGLYPDKSVYTQQ) lie on the Cytoplasmic side of the membrane. A helical membrane pass occupies residues 154-174 (IGPGLCFGALALMLRFFFEDW). A topological domain (extracellular) is located at residue Asp-175. A helical transmembrane segment spans residues 176-196 (YTYVHSFYHCALAMSFVLLLP). At 197–221 (KVNKKAGSPGTPAKLDCSTLCCACV) the chain is on the cytoplasmic side. S-palmitoyl cysteine attachment occurs at residues Cys-217 and Cys-218.

It belongs to the TMEM8 family. In terms of assembly, interacts with MYMX. In terms of processing, palmitoylated at the C-terminus; palmitoylation promotes localization to the Golgi apparatus.

Its subcellular location is the cell membrane. The protein resides in the golgi apparatus membrane. In terms of biological role, myoblast-specific protein that mediates myoblast fusion, an essential step for the formation of multi-nucleated muscle fibers. Actively participates in the membrane fusion reaction by mediating the mixing of cell membrane lipids (hemifusion) upstream of MYMX. Acts independently of MYMX. Involved in skeletal muscle regeneration in response to injury by mediating the fusion of satellite cells, a population of muscle stem cells, with injured myofibers. Also involved in skeletal muscle hypertrophy, probably by mediating the fusion of satellite cells with myofibers. This Homo sapiens (Human) protein is Protein myomaker.